Here is a 182-residue protein sequence, read N- to C-terminus: Ribulose bisphosphate carboxylase small subunit, chloroplastic 4 (182 aa).

A chloroplast-targeting transit peptide spans 1–41 (MSAAMMNKSVVLSKQCTKPAATPKVVTSKRSFASTVANKNR).

Belongs to the RuBisCO small chain family. As to quaternary structure, heterohexadecamer of 8 large and 8 small subunits.

It localises to the plastid. The protein localises to the chloroplast. In terms of biological role, ruBisCO catalyzes two reactions: the carboxylation of D-ribulose 1,5-bisphosphate, the primary event in carbon dioxide fixation, as well as the oxidative fragmentation of the pentose substrate. Both reactions occur simultaneously and in competition at the same active site. Although the small subunit is not catalytic it is essential for maximal activity. The chain is Ribulose bisphosphate carboxylase small subunit, chloroplastic 4 from Acetabularia acetabulum (Mermaid's wine glass).